A 44-amino-acid chain; its full sequence is Photosystem II reaction center protein K (44 aa).

Positions 1-7 are excised as a propeptide; sequence MESLLLA. The chain crosses the membrane as a helical span at residues 23-43; the sequence is LPIIPVFFLLLAFVWQAAIGF.

This sequence belongs to the PsbK family. PSII is composed of 1 copy each of membrane proteins PsbA, PsbB, PsbC, PsbD, PsbE, PsbF, PsbH, PsbI, PsbJ, PsbK, PsbL, PsbM, PsbT, PsbX, PsbY, PsbZ, Psb30/Ycf12, at least 3 peripheral proteins of the oxygen-evolving complex and a large number of cofactors. It forms dimeric complexes.

The protein resides in the plastid. It is found in the chloroplast thylakoid membrane. Functionally, one of the components of the core complex of photosystem II (PSII). PSII is a light-driven water:plastoquinone oxidoreductase that uses light energy to abstract electrons from H(2)O, generating O(2) and a proton gradient subsequently used for ATP formation. It consists of a core antenna complex that captures photons, and an electron transfer chain that converts photonic excitation into a charge separation. The polypeptide is Photosystem II reaction center protein K (Trieres chinensis (Marine centric diatom)).